Consider the following 1820-residue polypeptide: Histone-lysine N-methyltransferase, H3 lysine-9 specific (1820 aa).

Disordered regions lie at residues 1–54 (MPGA…TSMR), 74–251 (NLLP…TPVT), 284–618 (SLSD…APTK), 634–681 (SSER…KKAV), 804–836 (NVDD…SLSK), 850–893 (SSTL…VNSW), 911–944 (HAKK…EQLR), 966–996 (DVES…STDA), 1063–1126 (PLSV…NGAV), 1183–1270 (RYAV…DRTA), 1296–1335 (KASA…TSQQ), and 1385–1407 (RSEP…TDSD). Over residues 11-31 (VDNPLVLDSSDSDDNLSGLPL) the composition is skewed to low complexity. Positions 109–129 (ADSSSPPENQNVISFLGNHSQ) are enriched in polar residues. The segment covering 152–169 (GGENIAGQNNEANAAQAA) has biased composition (low complexity). 2 stretches are compositionally biased toward polar residues: residues 174 to 204 (GTPS…SAIN) and 212 to 222 (SIPQQSPSSRA). Low complexity-rich tracts occupy residues 226 to 236 (RSASIASSRSR), 284 to 311 (SLSD…TSTT), and 339 to 352 (TPAT…GPSA). The span at 361–370 (KSSDQKESPR) shows a compositional bias: basic and acidic residues. A compositionally biased stretch (polar residues) spans 374–385 (SKQPSSPSSTHG). Positions 400-424 (SATSGKSSAASSRSKSRAPLSSRAA) are enriched in low complexity. Positions 433-442 (SKTTSVSSTH) are enriched in polar residues. A compositionally biased stretch (low complexity) spans 443–459 (PPSRASPSSLPSQSQRQ). Over residues 479 to 510 (TLSSGTGQSTPSKFSLPTSDVASNQKNKSTGL) the composition is skewed to polar residues. Composition is skewed to low complexity over residues 514 to 531 (PKKP…RTST), 551 to 563 (QSSS…IQTS), and 594 to 618 (TKAT…APTK). Polar residues-rich tracts occupy residues 643–662 (GKSQ…TAAS) and 810–827 (SAQP…SVSS). The segment covering 850–861 (SSTLGDSVSGLG) has biased composition (low complexity). Positions 869 to 893 (TQSMPQSPLPTTNTNNSSGIEVNSW) are enriched in polar residues. Composition is skewed to basic and acidic residues over residues 917–944 (KERE…EQLR) and 966–983 (DVES…ETRK). Residues 1076 to 1089 (SSSSTSTPSLLSRS) are compositionally biased toward low complexity. Residues 1296 to 1320 (KASAVSPVPSANRPSPAPSAKADLL) show a composition bias toward low complexity. The region spanning 1516 to 1585 (LGCDCDGPCD…ECMNRVIQRG (70 aa)) is the Pre-SET domain. The Zn(2+) site is built by cysteine 1518, cysteine 1520, cysteine 1524, cysteine 1531, cysteine 1533, cysteine 1567, cysteine 1571, cysteine 1573, and cysteine 1577. Positions 1590-1750 (TGIEIFKTKE…KHEELCISYK (161 aa)) constitute an SET domain. S-adenosyl-L-methionine-binding positions include 1600 to 1602 (KGW), tyrosine 1643, arginine 1704, and 1707 to 1708 (NH). Cysteine 1710 is a Zn(2+) binding site. Residues 1756–1794 (DDIPSPEPVKKKKGGKGKKQMSKTSASAHPPEMTALNSD) form a disordered region. Basic residues predominate over residues 1765-1776 (KKKKGGKGKKQM). The 17-residue stretch at 1800–1816 (VKDICRCGAKNCDGRMF) folds into the Post-SET domain. The Zn(2+) site is built by cysteine 1804, cysteine 1806, and cysteine 1811.

Belongs to the class V-like SAM-binding methyltransferase superfamily. Histone-lysine methyltransferase family. Suvar3-9 subfamily.

It is found in the nucleus. Its subcellular location is the chromosome. It catalyses the reaction N(6)-methyl-L-lysyl(9)-[histone H3] + S-adenosyl-L-methionine = N(6),N(6)-dimethyl-L-lysyl(9)-[histone H3] + S-adenosyl-L-homocysteine + H(+). The catalysed reaction is L-lysyl(9)-[histone H3] + S-adenosyl-L-methionine = N(6)-methyl-L-lysyl(9)-[histone H3] + S-adenosyl-L-homocysteine + H(+). Its function is as follows. Histone methyltransferase that specifically dimethylates histone H3 to form H3K9me2. H3K9me2 represents a specific tag for epigenetic transcriptional repression by recruiting HP1 proteins to methylated histones. Mainly functions in heterochromatin regions, thereby playing a central role in the establishment of constitutive heterochromatin at centromeric regions. This Cryptococcus neoformans var. grubii serotype A (strain H99 / ATCC 208821 / CBS 10515 / FGSC 9487) (Filobasidiella neoformans var. grubii) protein is Histone-lysine N-methyltransferase, H3 lysine-9 specific.